A 201-amino-acid polypeptide reads, in one-letter code: 3-isopropylmalate dehydratase small subunit (201 aa).

It belongs to the LeuD family. LeuD type 1 subfamily. As to quaternary structure, heterodimer of LeuC and LeuD.

It catalyses the reaction (2R,3S)-3-isopropylmalate = (2S)-2-isopropylmalate. The protein operates within amino-acid biosynthesis; L-leucine biosynthesis; L-leucine from 3-methyl-2-oxobutanoate: step 2/4. Catalyzes the isomerization between 2-isopropylmalate and 3-isopropylmalate, via the formation of 2-isopropylmaleate. The protein is 3-isopropylmalate dehydratase small subunit of Shewanella piezotolerans (strain WP3 / JCM 13877).